We begin with the raw amino-acid sequence, 385 residues long: GDSL esterase/lipase At5g08460 (385 aa).

A signal peptide spans 1 to 35 (MHDSEIFKFKDMMMMSCTVQTLVLVPWFLVVFVLA). S56 acts as the Nucleophile in catalysis. 2 N-linked (GlcNAc...) asparagine glycosylation sites follow: N218 and N285. Catalysis depends on residues D350 and H353. 2 N-linked (GlcNAc...) asparagine glycosylation sites follow: N368 and N378.

The protein belongs to the 'GDSL' lipolytic enzyme family.

It is found in the secreted. The sequence is that of GDSL esterase/lipase At5g08460 from Arabidopsis thaliana (Mouse-ear cress).